The sequence spans 246 residues: Aquaporin AqpM (246 aa).

Residues 1-11 lie on the Cytoplasmic side of the membrane; sequence MVSLTKRCIAE. The helical transmembrane segment at 12 to 32 threads the bilayer; it reads FIGTFILVFFGAGSAAVTLMI. At 33-55 the chain is on the extracellular side; the sequence is ASGGTSPNPFNIGIGLLGGLGDW. Residues 56-76 form a helical membrane-spanning segment; sequence VAIGLAFGFAIAASIYALGNI. Residues 77 to 103 lie on the Cytoplasmic side of the membrane; it reads SGCHINPAVTIGLWSVKKFPGREVVPY. Positions 82–84 match the NPA 1 motif; it reads NPA. Residues 104–124 traverse the membrane as a helical segment; it reads IIAQLLGAAFGSFIFLQCAGI. The Extracellular segment spans residues 125–145; sequence GAATVGGLGATAPFPGISYWQ. Residues 146 to 166 traverse the membrane as a helical segment; that stretch reads AMLAEVVGTFLLMITIMGIAV. The Cytoplasmic portion of the chain corresponds to 167–172; that stretch reads DERAPK. Residues 173-193 form a helical membrane-spanning segment; the sequence is GFAGIIIGLTVAGIITTLGNI. At 194 to 217 the chain is on the extracellular side; that stretch reads SGSSLNPARTFGPYLNDMIFAGTN. Positions 199–201 match the NPA 2 motif; the sequence is NPA. The chain crosses the membrane as a helical span at residues 218 to 238; the sequence is LWNYYPIYVIGPIVGAVLAAL. Residues 239-246 are Cytoplasmic-facing; it reads TYQYLTSE.

Belongs to the MIP/aquaporin (TC 1.A.8) family. Homotetramer.

Its subcellular location is the cell membrane. Its function is as follows. Channel that permits osmotically driven movement of water in both directions. It mediates rapid entry or exit of water in response to abrupt changes in osmolarity. Also exhibits a transient but reproducible increase in the initial glycerol flux. In Methanothermobacter marburgensis (strain ATCC BAA-927 / DSM 2133 / JCM 14651 / NBRC 100331 / OCM 82 / Marburg) (Methanobacterium thermoautotrophicum), this protein is Aquaporin AqpM (aqpM).